A 681-amino-acid polypeptide reads, in one-letter code: Proton channel OTOP3 (681 aa).

The span at Met-1–Gly-25 shows a compositional bias: basic and acidic residues. The segment at Met-1–Lys-26 is disordered. Over Met-1 to Arg-112 the chain is Cytoplasmic. Residues Leu-113–Val-133 form a helical membrane-spanning segment. Topologically, residues Ala-134 to Arg-143 are extracellular. A helical membrane pass occupies residues Asp-144–Phe-166. Residues Ile-167–Ala-182 are Cytoplasmic-facing. Residues Met-183–Ile-204 form a helical membrane-spanning segment. At Gly-205–Leu-216 the chain is on the extracellular side. The chain crosses the membrane as a helical span at residues Met-217–Cys-240. The Cytoplasmic segment spans residues Lys-241–His-248. A helical transmembrane segment spans residues Ser-249 to Ile-271. Topologically, residues Asp-272 to Pro-317 are extracellular. Residues Phe-318–Trp-334 traverse the membrane as a helical segment. Topologically, residues Lys-335–Ile-358 are cytoplasmic. Residues Tyr-359–Tyr-378 form a helical membrane-spanning segment. Residues Gln-379 to Tyr-392 lie on the Extracellular side of the membrane. The chain crosses the membrane as a helical span at residues His-393–Ile-415. The Cytoplasmic segment spans residues Ala-416 to Lys-507. A helical membrane pass occupies residues Leu-508–Ile-529. The Extracellular portion of the chain corresponds to Ala-530–Leu-540. The chain crosses the membrane as a helical span at residues Ser-541–Ile-563. Residues Glu-564–Glu-614 lie on the Cytoplasmic side of the membrane. Residues Met-615 to Phe-632 form a helical membrane-spanning segment. Over Gly-633–Ile-651 the chain is Extracellular. A helical transmembrane segment spans residues Trp-652 to Leu-674. At Leu-675–Ala-681 the chain is on the cytoplasmic side.

This sequence belongs to the otopetrin family. Homodimer.

It localises to the cell membrane. The enzyme catalyses H(+)(in) = H(+)(out). PH regulates the proton channel activity from both sides of the plasma membrane. Low pH activates the channel from the extracellular side but inactivates the channel on the intracellular side. Zn(2+) and Ca(2+) can partially block the channel. Functionally, proton-selective channel gated by extracellular protons. This is Proton channel OTOP3 (otop3) from Xenopus tropicalis (Western clawed frog).